The primary structure comprises 168 residues: Cell division inhibitor SulA (168 aa).

The ftsZ binding stretch occupies residues 105–111 (ALETGNY). Residues 161–168 (RIHSRMVH) form a lon protease binding region.

This sequence belongs to the SulA family. As to quaternary structure, interacts with FtsZ. Post-translationally, is rapidly cleaved and degraded by the Lon protease once DNA damage is repaired.

Component of the SOS system and an inhibitor of cell division. Accumulation of SulA causes rapid cessation of cell division and the appearance of long, non-septate filaments. In the presence of GTP, binds a polymerization-competent form of FtsZ in a 1:1 ratio, thus inhibiting FtsZ polymerization and therefore preventing it from participating in the assembly of the Z ring. This mechanism prevents the premature segregation of damaged DNA to daughter cells during cell division. This is Cell division inhibitor SulA from Cronobacter turicensis (strain DSM 18703 / CCUG 55852 / LMG 23827 / z3032).